We begin with the raw amino-acid sequence, 247 residues long: Uridylate kinase (247 aa).

An ATP-binding site is contributed by 16-19 (KLSG). Residue glycine 58 participates in UMP binding. Residues glycine 59 and arginine 63 each coordinate ATP. UMP is bound by residues aspartate 78 and 139 to 146 (TGNPFFTT). Threonine 166, tyrosine 172, and aspartate 175 together coordinate ATP.

This sequence belongs to the UMP kinase family. As to quaternary structure, homohexamer.

It is found in the cytoplasm. The catalysed reaction is UMP + ATP = UDP + ADP. Its pathway is pyrimidine metabolism; CTP biosynthesis via de novo pathway; UDP from UMP (UMPK route): step 1/1. Its activity is regulated as follows. Inhibited by UTP. In terms of biological role, catalyzes the reversible phosphorylation of UMP to UDP. The protein is Uridylate kinase of Xylella fastidiosa (strain Temecula1 / ATCC 700964).